The sequence spans 37 residues: Large ribosomal subunit protein bL36 (37 aa).

It belongs to the bacterial ribosomal protein bL36 family.

The chain is Large ribosomal subunit protein bL36 from Borreliella afzelii (strain PKo) (Borrelia afzelii).